The chain runs to 581 residues: Arginine--tRNA ligase (581 aa).

A 'HIGH' region motif is present at residues 126–136 (PNLAKEMHVGH).

The protein belongs to the class-I aminoacyl-tRNA synthetase family. Monomer.

The protein localises to the cytoplasm. The catalysed reaction is tRNA(Arg) + L-arginine + ATP = L-arginyl-tRNA(Arg) + AMP + diphosphate. The protein is Arginine--tRNA ligase of Shewanella amazonensis (strain ATCC BAA-1098 / SB2B).